The following is a 345-amino-acid chain: NADH-ubiquinone oxidoreductase chain 2 (345 aa).

10 helical membrane passes run 1-21 (MNPI…ILTM), 25-45 (HWVS…PIIS), 59-79 (YFLI…TNAY), 96-116 (IMLS…FWLP), 123-143 (PMIT…ALLI), 148-168 (LIPP…GGLG), 191-211 (ITIT…YILL), 240-260 (TASL…LSGF), 274-294 (HLTP…MFYL), and 324-344 (SLLS…PLMI).

The protein belongs to the complex I subunit 2 family.

It is found in the mitochondrion inner membrane. The enzyme catalyses a ubiquinone + NADH + 5 H(+)(in) = a ubiquinol + NAD(+) + 4 H(+)(out). Core subunit of the mitochondrial membrane respiratory chain NADH dehydrogenase (Complex I) that is believed to belong to the minimal assembly required for catalysis. Complex I functions in the transfer of electrons from NADH to the respiratory chain. The immediate electron acceptor for the enzyme is believed to be ubiquinone. This chain is NADH-ubiquinone oxidoreductase chain 2 (MT-ND2), found in Varanus timorensis (Timor monitor).